A 1058-amino-acid polypeptide reads, in one-letter code: COP1-interacting protein 7 (1058 aa).

Disordered stretches follow at residues 123–147 (LGGT…GDTV), 262–281 (HGNS…QEGR), and 330–463 (MGDV…GNDN). Composition is skewed to polar residues over residues 126 to 136 (TWTSQKSTALS) and 262 to 276 (HGNS…SFET). A Nuclear localization signal 1 motif is present at residues 340–347 (SKKKKKKK). The span at 340-353 (SKKKKKKKKNKKKS) shows a compositional bias: basic residues. Residues 403–414 (DSDESGEEEGFV) show a composition bias toward acidic residues. The short motif at 431–438 (ERRHKSTS) is the Nuclear localization signal 2 element. The span at 432–446 (RRHKSTSHRQRKHKS) shows a compositional bias: basic residues. The segment covering 447-462 (HNGDDDSSNKETKGND) has biased composition (basic and acidic residues). Ser-477 carries the post-translational modification Phosphoserine. A disordered region spans residues 708-887 (AGEQTLDGKE…KSVELSRDPS (180 aa)). Residues 757-773 (SKSEMEEERKKRMEELL) are compositionally biased toward basic and acidic residues. Residues 764-771 (ERKKRMEE) carry the Nuclear localization signal 3 motif. The segment covering 783–808 (KSSGGSVSSSLASKKTPTVTKSVKSS) has biased composition (low complexity). 2 stretches are compositionally biased toward basic and acidic residues: residues 860–869 (KTEKAQEKKS) and 878–887 (KSVELSRDPS). Residues Ser-915, Ser-986, and Ser-992 each carry the phosphoserine modification. The tract at residues 1020-1041 (STPPATEADHSRKKWNSEETSP) is disordered. The segment covering 1026–1040 (EADHSRKKWNSEETS) has biased composition (basic and acidic residues).

In terms of assembly, interacts with COP1.

The protein localises to the nucleus. Exhibits transcriptional activation activity. Positive regulator of light-regulated genes, probably being a direct downstream target of COP1 for mediating light control of gene expression. The polypeptide is COP1-interacting protein 7 (Arabidopsis thaliana (Mouse-ear cress)).